We begin with the raw amino-acid sequence, 419 residues long: UDP-N-acetylglucosamine 1-carboxyvinyltransferase (419 aa).

Residue 22-23 coordinates phosphoenolpyruvate; it reads KN. Arg91 provides a ligand contact to UDP-N-acetyl-alpha-D-glucosamine. The active-site Proton donor is Cys115. At Cys115 the chain carries 2-(S-cysteinyl)pyruvic acid O-phosphothioketal. Residues 120-124, 160-163, Asp305, and Val327 contribute to the UDP-N-acetyl-alpha-D-glucosamine site; these read RPVDL and KVSV.

The protein belongs to the EPSP synthase family. MurA subfamily.

It is found in the cytoplasm. The enzyme catalyses phosphoenolpyruvate + UDP-N-acetyl-alpha-D-glucosamine = UDP-N-acetyl-3-O-(1-carboxyvinyl)-alpha-D-glucosamine + phosphate. Its pathway is cell wall biogenesis; peptidoglycan biosynthesis. Its function is as follows. Cell wall formation. Adds enolpyruvyl to UDP-N-acetylglucosamine. This Escherichia fergusonii (strain ATCC 35469 / DSM 13698 / CCUG 18766 / IAM 14443 / JCM 21226 / LMG 7866 / NBRC 102419 / NCTC 12128 / CDC 0568-73) protein is UDP-N-acetylglucosamine 1-carboxyvinyltransferase.